A 417-amino-acid chain; its full sequence is Serine hydroxymethyltransferase (417 aa).

(6S)-5,6,7,8-tetrahydrofolate is bound by residues leucine 121 and 125-127 (GHL). Lysine 229 carries the post-translational modification N6-(pyridoxal phosphate)lysine. Residue 355 to 357 (SPF) participates in (6S)-5,6,7,8-tetrahydrofolate binding.

The protein belongs to the SHMT family. As to quaternary structure, homodimer. Pyridoxal 5'-phosphate is required as a cofactor.

It is found in the cytoplasm. It catalyses the reaction (6R)-5,10-methylene-5,6,7,8-tetrahydrofolate + glycine + H2O = (6S)-5,6,7,8-tetrahydrofolate + L-serine. Its pathway is one-carbon metabolism; tetrahydrofolate interconversion. It participates in amino-acid biosynthesis; glycine biosynthesis; glycine from L-serine: step 1/1. In terms of biological role, catalyzes the reversible interconversion of serine and glycine with tetrahydrofolate (THF) serving as the one-carbon carrier. This reaction serves as the major source of one-carbon groups required for the biosynthesis of purines, thymidylate, methionine, and other important biomolecules. Also exhibits THF-independent aldolase activity toward beta-hydroxyamino acids, producing glycine and aldehydes, via a retro-aldol mechanism. This is Serine hydroxymethyltransferase from Stenotrophomonas maltophilia (strain K279a).